We begin with the raw amino-acid sequence, 253 residues long: Sec-independent protein translocase protein TatC (253 aa).

The next 5 helical transmembrane spans lie at 19-39 (ILII…LATP), 70-90 (FAFT…LWAF), 109-129 (IAFF…FPFL), 154-174 (FLFQ…VVMF), and 194-214 (FFVL…SHLM).

Belongs to the TatC family. Forms a complex with TatA.

It is found in the cell membrane. In terms of biological role, part of the twin-arginine translocation (Tat) system that transports large folded proteins containing a characteristic twin-arginine motif in their signal peptide across membranes. The chain is Sec-independent protein translocase protein TatC from Halalkalibacterium halodurans (strain ATCC BAA-125 / DSM 18197 / FERM 7344 / JCM 9153 / C-125) (Bacillus halodurans).